The primary structure comprises 155 residues: Ribosome maturation factor RimP (155 aa).

The protein belongs to the RimP family.

It localises to the cytoplasm. In terms of biological role, required for maturation of 30S ribosomal subunits. This Agathobacter rectalis (strain ATCC 33656 / DSM 3377 / JCM 17463 / KCTC 5835 / VPI 0990) (Eubacterium rectale) protein is Ribosome maturation factor RimP.